Consider the following 346-residue polypeptide: Uroporphyrinogen decarboxylase (346 aa).

Residues 26 to 30, Phe-45, Asp-76, Tyr-153, Ser-208, and His-323 each bind substrate; that span reads RQAGR.

Belongs to the uroporphyrinogen decarboxylase family. In terms of assembly, homodimer.

It is found in the cytoplasm. It carries out the reaction uroporphyrinogen III + 4 H(+) = coproporphyrinogen III + 4 CO2. It functions in the pathway porphyrin-containing compound metabolism; protoporphyrin-IX biosynthesis; coproporphyrinogen-III from 5-aminolevulinate: step 4/4. In terms of biological role, catalyzes the decarboxylation of four acetate groups of uroporphyrinogen-III to yield coproporphyrinogen-III. In Prochlorococcus marinus subsp. pastoris (strain CCMP1986 / NIES-2087 / MED4), this protein is Uroporphyrinogen decarboxylase.